Consider the following 1620-residue polypeptide: NAD-specific glutamate dehydrogenase (1620 aa).

Lysine 851 is an active-site residue.

Belongs to the Glu/Leu/Phe/Val dehydrogenases family. Homotetramer. Contains disulfide bonds (interchain).

It catalyses the reaction L-glutamate + NAD(+) + H2O = 2-oxoglutarate + NH4(+) + NADH + H(+). Its activity is regulated as follows. Activity subject to allosteric control by arginine and citrate, which function as positive and negative effectors, respectively. In terms of biological role, involved in arginine catabolism by converting L-glutamate, into 2-oxoglutarate, which is then channeled into the tricarboxylic acid cycle. Can also utilize other amino acids of the glutamate family. The sequence is that of NAD-specific glutamate dehydrogenase (gdhB) from Pseudomonas aeruginosa (strain ATCC 15692 / DSM 22644 / CIP 104116 / JCM 14847 / LMG 12228 / 1C / PRS 101 / PAO1).